We begin with the raw amino-acid sequence, 332 residues long: 2,3-diketo-L-gulonate reductase (332 aa).

Residue histidine 44 is the Proton donor of the active site. NAD(+)-binding positions include 168–174 (ITMVDMS), 224–225 (WK), and 304–306 (GHE).

The protein belongs to the LDH2/MDH2 oxidoreductase family. DlgD subfamily. As to quaternary structure, homodimer.

It is found in the cytoplasm. The enzyme catalyses 3-dehydro-L-gulonate + NAD(+) = 2,3-dioxo-L-gulonate + NADH + H(+). It catalyses the reaction 3-dehydro-L-gulonate + NADP(+) = 2,3-dioxo-L-gulonate + NADPH + H(+). Catalyzes the reduction of 2,3-diketo-L-gulonate in the presence of NADH, to form 3-keto-L-gulonate. The polypeptide is 2,3-diketo-L-gulonate reductase (Haemophilus influenzae (strain ATCC 51907 / DSM 11121 / KW20 / Rd)).